Reading from the N-terminus, the 388-residue chain is S-adenosylmethionine synthase (388 aa).

His-17 lines the ATP pocket. Mg(2+) is bound at residue Asp-19. Glu-45 serves as a coordination point for K(+). Glu-58 and Gln-102 together coordinate L-methionine. Positions 102–112 (QSADIAQGVDA) are flexible loop. ATP contacts are provided by residues 167–169 (DSK), 232–233 (RF), Asp-241, 247–248 (RK), Ala-264, and Lys-268. Position 241 (Asp-241) interacts with L-methionine. Residue Lys-272 coordinates L-methionine.

This sequence belongs to the AdoMet synthase family. Homotetramer; dimer of dimers. It depends on Mg(2+) as a cofactor. The cofactor is K(+).

It is found in the cytoplasm. It carries out the reaction L-methionine + ATP + H2O = S-adenosyl-L-methionine + phosphate + diphosphate. Its pathway is amino-acid biosynthesis; S-adenosyl-L-methionine biosynthesis; S-adenosyl-L-methionine from L-methionine: step 1/1. Functionally, catalyzes the formation of S-adenosylmethionine (AdoMet) from methionine and ATP. The overall synthetic reaction is composed of two sequential steps, AdoMet formation and the subsequent tripolyphosphate hydrolysis which occurs prior to release of AdoMet from the enzyme. This Paramagnetospirillum magneticum (strain ATCC 700264 / AMB-1) (Magnetospirillum magneticum) protein is S-adenosylmethionine synthase.